Reading from the N-terminus, the 467-residue chain is E3 ubiquitin-protein ligase TRIM11 (467 aa).

An RING-type zinc finger spans residues 16 to 57 (CAICLDYFTDPVMTDCGHNFCRECIRRCWGQPEGPYACPECR). Phosphoserine is present on Ser-85. The segment at 87–127 (VPQGVCAAHREPLTTFCGDDLSLLCPTCERSEHWAHRVRPL) adopts a B box-type zinc-finger fold. The Zn(2+) site is built by Cys-92, His-95, Cys-114, and His-119. A coiled-coil region spans residues 127-207 (LQEAADDLKG…KLEEEELEVL (81 aa)). Residues 267–460 (ELRTVCRVPG…MTICRLIGVS (194 aa)) enclose the B30.2/SPRY domain. Positions 304–313 (DRRSVQRGEQ) are enriched in basic and acidic residues. Residues 304–325 (DRRSVQRGEQRQALPDSPERFD) are disordered.

Belongs to the TRIM/RBCC family. Binds cytoplasmic tail of integrin alpha-1. Interacts with the HN peptide. Interacts with PHOX2B. Interacts (when autoubiquitinated) with SQSTM1/p62; promoting AIM2 recruitment to autophagosomes. Interacts with AIM2; promoting its autophagy-dependent degradation. In terms of processing, autoubiquitinated upon DNA stimulation; autoubiquitination promotes interaction with SQSTM1/p62 and recruitment of AIM2 to autophagosomes.

It localises to the cytoplasm. It is found in the nucleus. The enzyme catalyses S-ubiquitinyl-[E2 ubiquitin-conjugating enzyme]-L-cysteine + [acceptor protein]-L-lysine = [E2 ubiquitin-conjugating enzyme]-L-cysteine + N(6)-ubiquitinyl-[acceptor protein]-L-lysine.. The protein operates within protein modification; protein ubiquitination. Functionally, E3 ubiquitin-protein ligase that promotes the degradation of insoluble ubiquitinated proteins, including insoluble PAX6, poly-Gln repeat expanded HTT and poly-Ala repeat expanded ARX. Mediates PAX6 ubiquitination leading to proteasomal degradation, thereby modulating cortical neurogenesis. May also inhibit PAX6 transcriptional activity, possibly in part by preventing the binding of PAX6 to its consensus sequences. May contribute to the regulation of the intracellular level of HN (humanin) or HN-containing proteins through the proteasomal degradation pathway. Mediates MED15 ubiquitination leading to proteasomal degradation. May contribute to the innate restriction of retroviruses. Upon overexpression, reduces HIV-1 and murine leukemia virus infectivity, by suppressing viral gene expression. Antiviral activity depends on a functional E3 ubiquitin-protein ligase domain. May regulate TRIM5 turnover via the proteasome pathway, thus counteracting the TRIM5-mediated cross-species restriction of retroviral infection at early stages of the retroviral life cycle. Acts as an inhibitor of the AIM2 inflammasome by promoting autophagy-dependent degradation of AIM2. Mechanistically, undergoes autoubiquitination upon DNA stimulation, promoting interaction with AIM2 and SQSTM1/p62, leading to AIM2 recruitment to autophagosomes. In Rattus norvegicus (Rat), this protein is E3 ubiquitin-protein ligase TRIM11 (Trim11).